The primary structure comprises 202 residues: Protein G1-like4 (202 aa).

Disordered regions lie at residues 1 to 44 (MDLS…RYEA) and 158 to 202 (RARG…GAAC). The span at 12-22 (SGGGNGGGGGS) shows a compositional bias: gly residues. The span at 23-36 (SSSNSSPSMGAGAP) shows a compositional bias: low complexity. Positions 41–168 (RYEAQKRRDW…ARGVSYEKKK (128 aa)) constitute an ALOG domain. Residues 166 to 170 (KKKRK) carry the Nuclear localization signal motif. Over residues 173–186 (QQQQLQGGDSSGLH) the composition is skewed to low complexity. Positions 192-202 (PPPPPPAGAAC) are enriched in pro residues.

This sequence belongs to the plant homeotic and developmental regulators ALOG protein family.

It is found in the nucleus. Its function is as follows. Probable transcription regulator that acts as a developmental regulator by promoting cell growth in response to light. The protein is Protein G1-like4 of Oryza sativa subsp. indica (Rice).